Reading from the N-terminus, the 89-residue chain is Large ribosomal subunit protein bL27 (89 aa).

This sequence belongs to the bacterial ribosomal protein bL27 family.

The protein is Large ribosomal subunit protein bL27 of Ruegeria sp. (strain TM1040) (Silicibacter sp.).